A 175-amino-acid polypeptide reads, in one-letter code: Peptide deformylase (175 aa).

2 residues coordinate Fe cation: cysteine 92 and histidine 134. Glutamate 135 is a catalytic residue. Histidine 138 contacts Fe cation.

This sequence belongs to the polypeptide deformylase family. It depends on Fe(2+) as a cofactor.

The enzyme catalyses N-terminal N-formyl-L-methionyl-[peptide] + H2O = N-terminal L-methionyl-[peptide] + formate. Removes the formyl group from the N-terminal Met of newly synthesized proteins. Requires at least a dipeptide for an efficient rate of reaction. N-terminal L-methionine is a prerequisite for activity but the enzyme has broad specificity at other positions. In Blochmanniella floridana, this protein is Peptide deformylase.